The following is a 201-amino-acid chain: Protease (201 aa).

Active-site residues include histidine 56, aspartate 73, and cysteine 121.

Belongs to the peptidase C5 family. In terms of assembly, interacts with protease cofactor pVI-C; this interaction is necessary for protease activation.

Its subcellular location is the virion. It is found in the host nucleus. It catalyses the reaction Cleaves proteins of the adenovirus and its host cell at two consensus sites: -Yaa-Xaa-Gly-Gly-|-Xaa- and -Yaa-Xaa-Gly-Xaa-|-Gly- (in which Yaa is Met, Ile or Leu, and Xaa is any amino acid).. With respect to regulation, requires DNA and protease cofactor for maximal activation. Inside nascent virions, becomes partially activated by binding to the viral DNA, allowing it to cleave the cofactor that binds to the protease and fully activates it. Actin, like the viral protease cofactor, seems to act as a cofactor in the cleavage of cytokeratin 18 and of actin itself. Functionally, cleaves viral precursor proteins (pTP, pIIIa, pVI, pVII, pVIII, and pX) inside newly assembled particles giving rise to mature virions. Protease complexed to its cofactor slides along the viral DNA to specifically locate and cleave the viral precursors. Mature virions have a weakened organization compared to the unmature virions, thereby facilitating subsequent uncoating. Without maturation, the particle lacks infectivity and is unable to uncoat. Late in adenovirus infection, in the cytoplasm, may participate in the cytoskeleton destruction. Cleaves host cell cytoskeletal keratins K7 and K18. In Homo sapiens (Human), this protein is Protease.